The chain runs to 538 residues: Chaperonin GroEL (538 aa).

Residues 29–32, 86–90, Gly413, 479–481, and Asp495 each bind ATP; these read TLGP, DGTTT, and DAL.

The protein belongs to the chaperonin (HSP60) family. As to quaternary structure, forms a cylinder of 14 subunits composed of two heptameric rings stacked back-to-back. Interacts with the co-chaperonin GroES.

It is found in the cytoplasm. It carries out the reaction ATP + H2O + a folded polypeptide = ADP + phosphate + an unfolded polypeptide.. In terms of biological role, together with its co-chaperonin GroES, plays an essential role in assisting protein folding. The GroEL-GroES system forms a nano-cage that allows encapsulation of the non-native substrate proteins and provides a physical environment optimized to promote and accelerate protein folding. This chain is Chaperonin GroEL, found in Thermotoga neapolitana.